We begin with the raw amino-acid sequence, 180 residues long: Large ribosomal subunit protein uL16 (180 aa).

The protein belongs to the universal ribosomal protein uL16 family.

This Hyperthermus butylicus (strain DSM 5456 / JCM 9403 / PLM1-5) protein is Large ribosomal subunit protein uL16.